The chain runs to 441 residues: Double-stranded RNA-binding protein 1 (441 aa).

3 consecutive DRBM domains span residues 1 to 71, 86 to 155, and 169 to 237; these read MYKS…HLSS, SYKS…SLPQ, and SYKN…HFED. Residues 69–88 form a disordered region; the sequence is LSSLPLPPPPPPSENQSSYK.

Functionally, binds double-stranded RNA. The polypeptide is Double-stranded RNA-binding protein 1 (DRB1) (Oryza sativa subsp. japonica (Rice)).